The following is a 333-amino-acid chain: GTPase Obg (333 aa).

Residues 1-159 form the Obg domain; it reads MKFIDQTIIQ…RDIQLELILI (159 aa). The OBG-type G domain maps to 160 to 332; that stretch reads ADVGTLGMPN…LCSDIAFYLQ (173 aa). GTP is bound by residues 166–173, 191–195, 212–215, 282–285, and 313–315; these read GMPNAGKS, FTTLN, DIPG, NKID, and SSI. Residues Ser-173 and Thr-193 each contribute to the Mg(2+) site.

Belongs to the TRAFAC class OBG-HflX-like GTPase superfamily. OBG GTPase family. As to quaternary structure, monomer. Mg(2+) serves as cofactor.

The protein resides in the cytoplasm. In terms of biological role, an essential GTPase which binds GTP, GDP and possibly (p)ppGpp with moderate affinity, with high nucleotide exchange rates and a fairly low GTP hydrolysis rate. Plays a role in control of the cell cycle, stress response, ribosome biogenesis and in those bacteria that undergo differentiation, in morphogenesis control. This is GTPase Obg from Buchnera aphidicola subsp. Schizaphis graminum (strain Sg).